Consider the following 233-residue polypeptide: MLIVLSLGGSILAKNLDPDRFLKYADVLRKLSKKHTLLVVAGGGEAARNYIDTARAVGADEVTCDYIGIEITRLNAHLLAAALGPDACPEIPTNYLEASKAIRPGKVVVMGGVTPGQTTDAVAAILAEFLRADLLAIATSIDGVYSSDPNCDPSAVKYDKISPEKLINIVMAIEMKAGSKSPVDPVAAKIIERCKLDALVMDARDPVQLEEVLDREAAKKSPISCGTWITTKI.

Residue 9–10 (GS) coordinates ATP. Residue Gly43 participates in UMP binding. ATP is bound by residues Gly44 and Arg48. UMP-binding positions include Asp65 and 113-119 (VTPGQTT). The ATP site is built by Thr139, Tyr145, and Asp148.

It belongs to the UMP kinase family. As to quaternary structure, homohexamer.

It localises to the cytoplasm. The catalysed reaction is UMP + ATP = UDP + ADP. Its pathway is pyrimidine metabolism; CTP biosynthesis via de novo pathway; UDP from UMP (UMPK route): step 1/1. Inhibited by UTP. Its function is as follows. Catalyzes the reversible phosphorylation of UMP to UDP. The polypeptide is Uridylate kinase (Methanosarcina barkeri (strain Fusaro / DSM 804)).